Consider the following 63-residue polypeptide: Cytochrome c oxidase subunit 5C-1 (63 aa).

The helical transmembrane segment at 15-34 (SEVKELIIGSVLGLAAGGLW) threads the bilayer.

This sequence belongs to the cytochrome c oxidase subunit 5C family.

It is found in the mitochondrion inner membrane. Its function is as follows. This protein is one of the nuclear-coded polypeptide chains of cytochrome c oxidase, the terminal oxidase in mitochondrial electron transport. This Helianthus annuus (Common sunflower) protein is Cytochrome c oxidase subunit 5C-1 (COX5C1).